The following is a 523-amino-acid chain: 2-hydroxyisoflavanone synthase (523 aa).

A helical membrane pass occupies residues 2 to 22; it reads LVELAITLLVIALFIHLRPTP. Cysteine 450 lines the heme pocket.

It belongs to the cytochrome P450 family. Heme serves as cofactor.

It is found in the microsome membrane. The enzyme catalyses (2S)-liquiritigenin + reduced [NADPH--hemoprotein reductase] + O2 = (2R,3S)-2,4',7-trihydroxyisoflavanone + oxidized [NADPH--hemoprotein reductase] + H2O + H(+). It catalyses the reaction (2S)-naringenin + reduced [NADPH--hemoprotein reductase] + O2 = 2-hydroxy-2,3-dihydrogenistein + oxidized [NADPH--hemoprotein reductase] + H2O + H(+). Functionally, 2-hydroxyisoflavanone synthase, which catalyzes the hydroxylation associated with 1,2-aryl migration of flavanones. Converts liquiritigenin and naringenin into highly unstable precursors of the isoflavones daidzein and genistein. This chain is 2-hydroxyisoflavanone synthase (CYP93C2), found in Glycyrrhiza uralensis (Chinese licorice).